A 392-amino-acid chain; its full sequence is 8-amino-7-oxononanoate synthase (392 aa).

Arginine 21 lines the substrate pocket. Position 114 to 115 (114 to 115) interacts with pyridoxal 5'-phosphate; that stretch reads GY. A substrate-binding site is contributed by histidine 139. Pyridoxal 5'-phosphate is bound by residues serine 187, 212–215, and 243–246; these read DEAH and TFGK. Lysine 246 carries the N6-(pyridoxal phosphate)lysine modification. Residue threonine 359 participates in substrate binding.

Belongs to the class-II pyridoxal-phosphate-dependent aminotransferase family. BioF subfamily. Homodimer. Pyridoxal 5'-phosphate is required as a cofactor.

It catalyses the reaction 6-carboxyhexanoyl-[ACP] + L-alanine + H(+) = (8S)-8-amino-7-oxononanoate + holo-[ACP] + CO2. It participates in cofactor biosynthesis; biotin biosynthesis. Its function is as follows. Catalyzes the decarboxylative condensation of pimeloyl-[acyl-carrier protein] and L-alanine to produce 8-amino-7-oxononanoate (AON), [acyl-carrier protein], and carbon dioxide. The protein is 8-amino-7-oxononanoate synthase of Chlorobaculum parvum (strain DSM 263 / NCIMB 8327) (Chlorobium vibrioforme subsp. thiosulfatophilum).